The chain runs to 255 residues: Acetylglutamate kinase (255 aa).

Residues 40–41 (GG), Arg-62, and Asn-153 contribute to the substrate site.

This sequence belongs to the acetylglutamate kinase family. ArgB subfamily.

Its subcellular location is the cytoplasm. The catalysed reaction is N-acetyl-L-glutamate + ATP = N-acetyl-L-glutamyl 5-phosphate + ADP. It functions in the pathway amino-acid biosynthesis; L-arginine biosynthesis; N(2)-acetyl-L-ornithine from L-glutamate: step 2/4. Its function is as follows. Catalyzes the ATP-dependent phosphorylation of N-acetyl-L-glutamate. The protein is Acetylglutamate kinase of Bacillus cereus (strain B4264).